The chain runs to 100 residues: Urease subunit gamma (100 aa).

It belongs to the urease gamma subunit family. In terms of assembly, heterotrimer of UreA (gamma), UreB (beta) and UreC (alpha) subunits. Three heterotrimers associate to form the active enzyme.

The protein resides in the cytoplasm. The enzyme catalyses urea + 2 H2O + H(+) = hydrogencarbonate + 2 NH4(+). It participates in nitrogen metabolism; urea degradation; CO(2) and NH(3) from urea (urease route): step 1/1. This Klebsiella pneumoniae protein is Urease subunit gamma.